The sequence spans 543 residues: Protein phosphatase 1G (543 aa).

Gly-2 carries the N-myristoyl glycine lipid modification. Arg-22 carries the omega-N-methylarginine modification. The region spanning 26–503 is the PPM-type phosphatase domain; that stretch reads PYGFSAMQGW…DNMTCIIICF (478 aa). The Mn(2+) site is built by Asp-60 and Gly-61. Disordered regions lie at residues 116–139 and 163–326; these read QIAG…DVDN and NCHK…SDSG. Thr-122 is subject to Phosphothreonine. The span at 123–139 shows a compositional bias: acidic residues; the sequence is EDEDEKEKVADEDDVDN. Ser-183 carries the phosphoserine modification. Residues 259-310 are compositionally biased toward acidic residues; the sequence is DSEDESDEAEEEEEDSEECSEEEDGYSSEEAENEEDEDDTEEAEEDDEEEEM. Residue Lys-381 is modified to N6-acetyllysine. 2 residues coordinate Mn(2+): Asp-439 and Asp-494. Positions 508–543 are disordered; sequence TAAPQPESGKRKLEEVLSTEGAEENGNSDKKKAKRD. Ser-525 bears the Phosphoserine mark.

Belongs to the PP2C family. As to quaternary structure, interacts with NOL3; may dephosphorylate NOL3. It depends on Mg(2+) as a cofactor. Requires Mn(2+) as cofactor.

The protein localises to the cytoplasm. Its subcellular location is the membrane. It carries out the reaction O-phospho-L-seryl-[protein] + H2O = L-seryl-[protein] + phosphate. The catalysed reaction is O-phospho-L-threonyl-[protein] + H2O = L-threonyl-[protein] + phosphate. The sequence is that of Protein phosphatase 1G (PPM1G) from Bos taurus (Bovine).